Consider the following 647-residue polypeptide: 1-deoxy-D-xylulose-5-phosphate synthase (647 aa).

Thiamine diphosphate-binding positions include H79 and 120 to 122 (GHA). Residue D152 participates in Mg(2+) binding. Thiamine diphosphate contacts are provided by residues 153–154 (GS), N181, F293, and E377. N181 is a binding site for Mg(2+).

Belongs to the transketolase family. DXPS subfamily. In terms of assembly, homodimer. The cofactor is Mg(2+). Thiamine diphosphate serves as cofactor.

It catalyses the reaction D-glyceraldehyde 3-phosphate + pyruvate + H(+) = 1-deoxy-D-xylulose 5-phosphate + CO2. It functions in the pathway metabolic intermediate biosynthesis; 1-deoxy-D-xylulose 5-phosphate biosynthesis; 1-deoxy-D-xylulose 5-phosphate from D-glyceraldehyde 3-phosphate and pyruvate: step 1/1. Catalyzes the acyloin condensation reaction between C atoms 2 and 3 of pyruvate and glyceraldehyde 3-phosphate to yield 1-deoxy-D-xylulose-5-phosphate (DXP). The protein is 1-deoxy-D-xylulose-5-phosphate synthase of Bacteroides thetaiotaomicron (strain ATCC 29148 / DSM 2079 / JCM 5827 / CCUG 10774 / NCTC 10582 / VPI-5482 / E50).